A 166-amino-acid chain; its full sequence is 2S seed storage protein 4 (166 aa).

Residues 1–21 (MANKLFLVCAALALCFILTNA) form the signal peptide. Propeptides lie at residues 22 to 37 (SVYRTVVEFDEDDASN) and 73 to 88 (GPSLDDEFDMEDDIEN).

It belongs to the 2S seed storage albumins family. In terms of assembly, the mature protein consists of a small and a large chain linked by disulfide bonds.

Its function is as follows. This is a 2S seed storage protein. This chain is 2S seed storage protein 4 (AT2S4), found in Arabidopsis thaliana (Mouse-ear cress).